A 347-amino-acid polypeptide reads, in one-letter code: NADH-quinone oxidoreductase subunit H (347 aa).

8 helical membrane-spanning segments follow: residues 14–34 (IMIG…AYIL), 82–102 (AVFL…WAVI), 115–135 (VGIL…IMGG), 161–181 (IGFV…TDIV), 198–218 (LLDW…ISAL), 258–278 (AIVL…LPPL), 285–305 (WVPG…MFGI), and 321–341 (LGWK…AFVL).

This sequence belongs to the complex I subunit 1 family. In terms of assembly, NDH-1 is composed of 14 different subunits. Subunits NuoA, H, J, K, L, M, N constitute the membrane sector of the complex.

It localises to the cell inner membrane. The enzyme catalyses a quinone + NADH + 5 H(+)(in) = a quinol + NAD(+) + 4 H(+)(out). Its function is as follows. NDH-1 shuttles electrons from NADH, via FMN and iron-sulfur (Fe-S) centers, to quinones in the respiratory chain. The immediate electron acceptor for the enzyme in this species is believed to be ubiquinone. Couples the redox reaction to proton translocation (for every two electrons transferred, four hydrogen ions are translocated across the cytoplasmic membrane), and thus conserves the redox energy in a proton gradient. This subunit may bind ubiquinone. This Allorhizobium ampelinum (strain ATCC BAA-846 / DSM 112012 / S4) (Agrobacterium vitis (strain S4)) protein is NADH-quinone oxidoreductase subunit H.